The sequence spans 549 residues: FMRFamide receptor (549 aa).

Over M1 to G117 the chain is Extracellular. N-linked (GlcNAc...) asparagine glycans are attached at residues N59, N70, and N93. The chain crosses the membrane as a helical span at residues V118–L138. The Cytoplasmic segment spans residues S139–D158. A helical transmembrane segment spans residues T159–G179. Residues H180–F181 lie on the Extracellular side of the membrane. The helical transmembrane segment at F182 to I202 threads the bilayer. Residues A203–K238 lie on the Cytoplasmic side of the membrane. The helical transmembrane segment at I239–V259 threads the bilayer. Over L260–N289 the chain is Extracellular. A helical transmembrane segment spans residues I290–I310. The Cytoplasmic portion of the chain corresponds to L311–T341. A helical membrane pass occupies residues M342–I362. Residues S363 to K376 are Extracellular-facing. A helical transmembrane segment spans residues I377–G397. Residues E398–F549 are Cytoplasmic-facing.

This sequence belongs to the G-protein coupled receptor 1 family. In terms of tissue distribution, expressed in ovaries, heads and bodies. Expressed in dopaminergic neurons.

It localises to the cell membrane. In terms of biological role, a receptor for the FMRFamide peptides. Reacts with high affinity to FMRFamide and intrinsic FMRFamide-related peptides. By stimulating intracellular calcium signaling through the inositol 1,4,5-trisphosphate receptor, Itpr, in dopaminergic neurons, may be involved in the maintenance of neuronal excitability and in the regulation of flight bout duration. The chain is FMRFamide receptor from Drosophila melanogaster (Fruit fly).